We begin with the raw amino-acid sequence, 197 residues long: Putative peptidyl-prolyl cis-trans isomerase (197 aa).

The PPIase cyclophilin-type domain occupies 14–195 (NEIKLIMHTN…HDITIDSIEI (182 aa)).

Belongs to the cyclophilin-type PPIase family.

The catalysed reaction is [protein]-peptidylproline (omega=180) = [protein]-peptidylproline (omega=0). Functionally, PPIases accelerate the folding of proteins. It catalyzes the cis-trans isomerization of proline imidic peptide bonds in oligopeptides. This chain is Putative peptidyl-prolyl cis-trans isomerase, found in Staphylococcus saprophyticus subsp. saprophyticus (strain ATCC 15305 / DSM 20229 / NCIMB 8711 / NCTC 7292 / S-41).